The following is a 501-amino-acid chain: Aldehyde dehydrogenase 1A1 (501 aa).

Ser-2 carries the post-translational modification N-acetylserine. N6-acetyllysine occurs at positions 91 and 128. NAD(+) is bound by residues 167 to 170 (IPWN), 193 to 196 (KPAE), 226 to 227 (GP), and 246 to 247 (GS). Residue Lys-252 is modified to N6-acetyllysine. The active-site Proton acceptor is Glu-269. Residue 269-271 (ELG) coordinates NAD(+). Cys-303 (nucleophile) is an active-site residue. The interval 336–501 (LNSGINQGPQ…VAIKISQKNS (166 aa)) is mediates interaction with PRMT3. 349 to 353 (EQHDK) lines the NAD(+) pocket. N6-acetyllysine occurs at positions 353 and 367. Residue 400-402 (EIF) coordinates NAD(+). The residue at position 410 (Lys-410) is an N6-acetyllysine. Ser-413 carries the phosphoserine modification. Residues Lys-419, Lys-435, and Lys-495 each carry the N6-acetyllysine modification.

The protein belongs to the aldehyde dehydrogenase family. Homotetramer. Interacts with PRMT3; the interaction is direct, inhibits ALDH1A1 aldehyde dehydrogenase activity and is independent of the methyltransferase activity of PRMT3. The N-terminus is blocked most probably by acetylation.

The protein localises to the cytoplasm. Its subcellular location is the cytosol. It is found in the cell projection. It localises to the axon. It catalyses the reaction an aldehyde + NAD(+) + H2O = a carboxylate + NADH + 2 H(+). It carries out the reaction all-trans-retinal + NAD(+) + H2O = all-trans-retinoate + NADH + 2 H(+). The enzyme catalyses 9-cis-retinal + NAD(+) + H2O = 9-cis-retinoate + NADH + 2 H(+). The catalysed reaction is 11-cis-retinal + NAD(+) + H2O = 11-cis-retinoate + NADH + 2 H(+). It catalyses the reaction 13-cis-retinal + NAD(+) + H2O = 13-cis-retinoate + NADH + 2 H(+). It carries out the reaction 3-deoxyglucosone + NAD(+) + H2O = 2-dehydro-3-deoxy-D-gluconate + NADH + 2 H(+). The enzyme catalyses (E)-4-hydroxynon-2-enal + NAD(+) + H2O = (E)-4-hydroxynon-2-enoate + NADH + 2 H(+). The catalysed reaction is malonaldehyde + NAD(+) + H2O = 3-oxopropanoate + NADH + 2 H(+). It catalyses the reaction hexanal + NAD(+) + H2O = hexanoate + NADH + 2 H(+). It carries out the reaction propanal + NAD(+) + H2O = propanoate + NADH + 2 H(+). The enzyme catalyses acetaldehyde + NAD(+) + H2O = acetate + NADH + 2 H(+). The catalysed reaction is benzaldehyde + NAD(+) + H2O = benzoate + NADH + 2 H(+). It catalyses the reaction 4-aminobutanal + NAD(+) + H2O = 4-aminobutanoate + NADH + 2 H(+). It functions in the pathway cofactor metabolism; retinol metabolism. Its function is as follows. Cytosolic dehydrogenase that catalyzes the irreversible oxidation of a wide range of aldehydes to their corresponding carboxylic acid. Functions downstream of retinol dehydrogenases and catalyzes the oxidation of retinaldehyde into retinoic acid, the second step in the oxidation of retinol/vitamin A into retinoic acid. This pathway is crucial to control the levels of retinol and retinoic acid, two important molecules which excess can be teratogenic and cytotoxic. Also oxidizes aldehydes resulting from lipid peroxidation like (E)-4-hydroxynon-2-enal/HNE, malonaldehyde and hexanal that form protein adducts and are highly cytotoxic. By participating for instance to the clearance of (E)-4-hydroxynon-2-enal/HNE in the lens epithelium prevents the formation of HNE-protein adducts and lens opacification. Also functions downstream of fructosamine-3-kinase in the fructosamine degradation pathway by catalyzing the oxidation of 3-deoxyglucosone, the carbohydrate product of fructosamine 3-phosphate decomposition, which is itself a potent glycating agent that may react with lysine and arginine side-chains of proteins. Also has an aminobutyraldehyde dehydrogenase activity and is probably part of an alternative pathway for the biosynthesis of GABA/4-aminobutanoate in midbrain, thereby playing a role in GABAergic synaptic transmission. The polypeptide is Aldehyde dehydrogenase 1A1 (Mesocricetus auratus (Golden hamster)).